Here is a 222-residue protein sequence, read N- to C-terminus: Kinetochore protein Spc25 (222 aa).

Residues 51 to 86 adopt a coiled-coil conformation; it reads RHQRKVGKLQKVLMERREELDKRVSFIEELDRELEA.

The protein belongs to the SPC25 family. Component of the Ndc80 complex, which is composed of Ndc80, Nuf2 and Spc25.

It is found in the nucleus. The protein localises to the chromosome. Its subcellular location is the centromere. It localises to the kinetochore. Its function is as follows. Acts as a component of the essential kinetochore-associated Ndc80 complex, which is required for chromosome segregation and spindle checkpoint activity during meiosis and mitosis. Required for kinetochore integrity and the organization of stable microtubule binding sites in the outer plate of the kinetochore. Participates in SAC signaling that responds specifically to disruptions in spindle microtubule dynamics. The NDC80 complex synergistically enhances the affinity of the SKA1 complex for microtubules and may allow the NDC80 complex to track depolymerizing microtubules. In Drosophila melanogaster (Fruit fly), this protein is Kinetochore protein Spc25.